We begin with the raw amino-acid sequence, 137 residues long: Methylglyoxal synthase (137 aa).

One can recognise an MGS-like domain in the interval 1 to 137; sequence MNIALVAHDK…KLSHNDEPPA (137 aa). Substrate is bound by residues histidine 8, lysine 12, 34-37, and 54-55; these read TGTT and SG. The active-site Proton donor/acceptor is the aspartate 60. Histidine 87 lines the substrate pocket.

The protein belongs to the methylglyoxal synthase family.

It catalyses the reaction dihydroxyacetone phosphate = methylglyoxal + phosphate. In terms of biological role, catalyzes the formation of methylglyoxal from dihydroxyacetone phosphate. This Exiguobacterium sp. (strain ATCC BAA-1283 / AT1b) protein is Methylglyoxal synthase.